The primary structure comprises 156 residues: Cytochrome c-type biogenesis protein CcmE 1 (156 aa).

Topologically, residues 1–8 are cytoplasmic; sequence MNATRKQR. A helical; Signal-anchor for type II membrane protein membrane pass occupies residues 9-29; the sequence is LWLVIGVLTAAALAVTLIALA. Residues 30–156 are Periplasmic-facing; the sequence is LQRNMSYLFT…AAAAPLSGVR (127 aa). Residues His-123 and Tyr-127 each coordinate heme.

It belongs to the CcmE/CycJ family.

Its subcellular location is the cell inner membrane. In terms of biological role, heme chaperone required for the biogenesis of c-type cytochromes. Transiently binds heme delivered by CcmC and transfers the heme to apo-cytochromes in a process facilitated by CcmF and CcmH. The sequence is that of Cytochrome c-type biogenesis protein CcmE 1 from Xanthomonas campestris pv. campestris (strain 8004).